Here is a 69-residue protein sequence, read N- to C-terminus: ATP synthase F(0) complex subunit e, mitochondrial (69 aa).

Residue lysine 34 is modified to N6-acetyllysine.

It belongs to the ATPase e subunit family. Component of the ATP synthase complex composed at least of ATP5F1A/subunit alpha, ATP5F1B/subunit beta, ATP5MC1/subunit c (homooctomer), MT-ATP6/subunit a, MT-ATP8/subunit 8, ATP5ME/subunit e, ATP5MF/subunit f, ATP5MG/subunit g, ATP5MK/subunit k, ATP5MJ/subunit j, ATP5F1C/subunit gamma, ATP5F1D/subunit delta, ATP5F1E/subunit epsilon, ATP5PF/subunit F6, ATP5PB/subunit b, ATP5PD/subunit d, ATP5PO/subunit OSCP. ATP synthase complex consists of a soluble F(1) head domain (subunits alpha(3) and beta(3)) - the catalytic core - and a membrane F(0) domain - the membrane proton channel (subunits c, a, 8, e, f, g, k and j). These two domains are linked by a central stalk (subunits gamma, delta, and epsilon) rotating inside the F1 region and a stationary peripheral stalk (subunits F6, b, d, and OSCP).

The protein resides in the mitochondrion. It is found in the mitochondrion inner membrane. Its function is as follows. Subunit e, of the mitochondrial membrane ATP synthase complex (F(1)F(0) ATP synthase or Complex V) that produces ATP from ADP in the presence of a proton gradient across the membrane which is generated by electron transport complexes of the respiratory chain. ATP synthase complex consist of a soluble F(1) head domain - the catalytic core - and a membrane F(1) domain - the membrane proton channel. These two domains are linked by a central stalk rotating inside the F(1) region and a stationary peripheral stalk. During catalysis, ATP synthesis in the catalytic domain of F(1) is coupled via a rotary mechanism of the central stalk subunits to proton translocation. In vivo, can only synthesize ATP although its ATP hydrolase activity can be activated artificially in vitro. Part of the complex F(0) domain. The protein is ATP synthase F(0) complex subunit e, mitochondrial of Cricetulus longicaudatus (Long-tailed dwarf hamster).